A 240-amino-acid chain; its full sequence is Guanylate kinase (240 aa).

The Guanylate kinase-like domain maps to Gly56 to Leu236. Residue Gly63–Ser70 coordinates ATP.

It belongs to the guanylate kinase family.

It localises to the cytoplasm. It catalyses the reaction GMP + ATP = GDP + ADP. Essential for recycling GMP and indirectly, cGMP. The chain is Guanylate kinase (gmk) from Mycoplasma genitalium (strain ATCC 33530 / DSM 19775 / NCTC 10195 / G37) (Mycoplasmoides genitalium).